The chain runs to 603 residues: Arginine--tRNA ligase (603 aa).

Positions proline 143–histidine 153 match the 'HIGH' region motif.

The protein belongs to the class-I aminoacyl-tRNA synthetase family. In terms of assembly, monomer.

It localises to the cytoplasm. It carries out the reaction tRNA(Arg) + L-arginine + ATP = L-arginyl-tRNA(Arg) + AMP + diphosphate. The chain is Arginine--tRNA ligase from Prochlorococcus marinus (strain SARG / CCMP1375 / SS120).